Consider the following 142-residue polypeptide: MVHFTAEEKAAITSLWGKMNVEEAGGEALGRLLVVYPWTQRFFDNFGNLSSPSAILGNPKVKAHGKKVLTSFGDAIKNMDNLKTTFAKLSELHCDKLHVDPENFRLLGNVLVIILATHFGKEFTPEVQAASQKLVSAVAIAL.

The 140-residue stretch at histidine 3–leucine 142 folds into the Globin domain. A phosphoserine mark is found at serine 14 and serine 51. Heme b is bound by residues histidine 64 and histidine 93.

Belongs to the globin family. As to quaternary structure, heterotetramer of two alpha chains and two epsilon chains in early embryonic hemoglobin Gower-2; two zeta chains and two epsilon chains in early embryonic hemoglobin Gower-1. In terms of tissue distribution, red blood cells.

In terms of biological role, the epsilon chain is a beta-type chain of early mammalian embryonic hemoglobin. This Callithrix geoffroyi (Geoffroy's marmoset) protein is Hemoglobin subunit epsilon (HBE1).